Consider the following 90-residue polypeptide: Hemoglobin subunit alpha-1 (90 aa).

The Globin domain maps to 1–90 (VLTDDDKNHV…SKLSDLHAEK (90 aa)).

The protein belongs to the globin family. As to quaternary structure, heterotetramer of two alpha chains and two beta chains. In terms of tissue distribution, red blood cells.

Its function is as follows. Involved in oxygen transport from the lung to the various peripheral tissues. The chain is Hemoglobin subunit alpha-1 from Saara hardwickii (Indian spiny-tailed lizard).